Here is a 1331-residue protein sequence, read N- to C-terminus: X-linked retinitis pigmentosa GTPase regulator-interacting protein 1 (1331 aa).

3 disordered regions span residues 1 to 165 (MQHL…PPAF), 183 to 220 (SQLTHTMTTDSTHVEEIPRSPEKTSKVEKPEQRSSEEC), and 351 to 374 (HQPLDSSHQPHWSTELTGKQLPPQ). Residues 41-67 (NQKELNCRRLHLHEEPTLVKEPSPKQR) show a composition bias toward basic and acidic residues. Composition is skewed to polar residues over residues 77-86 (VQRSTTTQPD) and 183-193 (SQLTHTMTTDS). Positions 194–220 (THVEEIPRSPEKTSKVEKPEQRSSEEC) are enriched in basic and acidic residues. Coiled-coil stretches lie at residues 236–352 (ELIR…SSHQ) and 498–546 (MCYQ…LRSH). Over residues 351 to 367 (HQPLDSSHQPHWSTELT) the composition is skewed to polar residues. In terms of domain architecture, C2 spans 745–870 (GARKVQSNES…AQNKSIKGDF (126 aa)). Disordered regions lie at residues 899–1057 (FQMS…VQDK) and 1088–1146 (AEDG…SDDI). Positions 908-999 (EGEEKEEEGG…DVLEASFTEE (92 aa)) form a coiled coil. Residues 910–988 (EEKEEEGGEE…EEEEEEEDEN (79 aa)) show a composition bias toward acidic residues. Basic and acidic residues-rich tracts occupy residues 1022 to 1039 (PEKRKPPVIAEKKEREHQ) and 1088 to 1115 (AEDGGLKAQDKREEPPSPRSALRQEHPS). The span at 1129–1141 (CEQASEVSETQTT) shows a compositional bias: polar residues. An interaction with RPGR region spans residues 1136-1326 (SETQTTDSDD…ALHGIYKEMT (191 aa)).

The protein belongs to the RPGRIP1 family. As to quaternary structure, interacts with NPHP4. Interacts with NEK4. Forms homodimers and elongated homopolymers. Interacts with RPGR. Interacts with SPATA7. Interacts with CEP290/NPHP6; mediating the association between RPGR and CEP290/NPHP6. As to expression, expressed in the retina (at protein level).

The protein localises to the cell projection. It is found in the cilium. In terms of biological role, may function as scaffolding protein. Required for normal location of RPGR at the connecting cilium of photoreceptor cells. Required for normal disk morphogenesis and disk organization in the outer segment of photoreceptor cells and for survival of photoreceptor cells. This Mus musculus (Mouse) protein is X-linked retinitis pigmentosa GTPase regulator-interacting protein 1 (Rpgrip1).